The following is a 266-amino-acid chain: Tryptophan synthase alpha chain (266 aa).

Active-site proton acceptor residues include E51 and D62.

It belongs to the TrpA family. As to quaternary structure, tetramer of two alpha and two beta chains.

It catalyses the reaction (1S,2R)-1-C-(indol-3-yl)glycerol 3-phosphate + L-serine = D-glyceraldehyde 3-phosphate + L-tryptophan + H2O. Its pathway is amino-acid biosynthesis; L-tryptophan biosynthesis; L-tryptophan from chorismate: step 5/5. The alpha subunit is responsible for the aldol cleavage of indoleglycerol phosphate to indole and glyceraldehyde 3-phosphate. This Thermosynechococcus vestitus (strain NIES-2133 / IAM M-273 / BP-1) protein is Tryptophan synthase alpha chain.